The sequence spans 78 residues: Large ribosomal subunit protein bL28 (78 aa).

The protein belongs to the bacterial ribosomal protein bL28 family.

The polypeptide is Large ribosomal subunit protein bL28 (Trichormus variabilis (strain ATCC 29413 / PCC 7937) (Anabaena variabilis)).